Reading from the N-terminus, the 714-residue chain is Stellatatriene synthase (714 aa).

The stellata-2,6,19-trien synthase stretch occupies residues 1-325 (MEYKFSTVVD…RYNSSGSFSD (325 aa)). Positions 92 and 96 each coordinate Mg(2+). The short motif at 92–96 (DDVTD) is the DDXXD motif 1 element. Positions 276–284 (YLKIVEEYK) match the NSE motif motif. A geranylgeranyl diphosphate synthase region spans residues 326 to 713 (HQLELMKNGV…LRLIMELLKT (388 aa)). The disordered stretch occupies residues 332–356 (KNGVPKDPASGSTNGTSNGTSNGTS). The span at 341-356 (SGSTNGTSNGTSNGTS) shows a compositional bias: low complexity. Isopentenyl diphosphate contacts are provided by lysine 434, arginine 437, and histidine 466. The Mg(2+) site is built by aspartate 473 and aspartate 477. The short motif at 473–477 (DDVED) is the DDXXD motif 2 element. Arginine 482 serves as a coordination point for dimethylallyl diphosphate. Arginine 483 provides a ligand contact to isopentenyl diphosphate. The dimethylallyl diphosphate site is built by lysine 560, threonine 561, glutamine 596, asparagine 603, lysine 613, and lysine 623.

This sequence in the N-terminal section; belongs to the terpene synthase family. In the C-terminal section; belongs to the FPP/GGPP synthase family. Hexamer.

The enzyme catalyses 4 isopentenyl diphosphate + dimethylallyl diphosphate = (2E,6E,10E,14E)-geranylfarnesyl diphosphate + 4 diphosphate. The catalysed reaction is (2E,6E,10E,14E)-geranylfarnesyl diphosphate = stellata-2,6,19-triene + diphosphate. It participates in secondary metabolite biosynthesis; terpenoid biosynthesis. Functionally, multifunctional diterpene synthase; part of the gene cluster that mediates the biosynthesis of the sesterterpene stellatic acid. The first step in the pathway is performed by the stellatatriene synthase that possesses both prenyl transferase and terpene cyclase activity, converting isopentenyl diphosphate and dimethylallyl diphosphate into geranylgeranyl diphosphate (GGDP) and then converting GGDP into stellata-2,6,19-triene. The cytochrome P450 monooxygenase Stl-P450 then catalyzes three successive oxidation reactions on the C-20 methyl group to generate the carboxylic acid of stellatic acid. The sequence is that of Stellatatriene synthase from Emericella variicolor (Aspergillus stellatus).